A 253-amino-acid polypeptide reads, in one-letter code: uncharacterized protein (253 aa).

A signal peptide spans 1–19; that stretch reads MRYLKKVTIYISLLILVSG. A lipid anchor (N-palmitoyl cysteine) is attached at Cys-20. Cys-20 is lipidated: S-diacylglycerol cysteine.

The protein belongs to the staphylococcal tandem lipoprotein family.

Its subcellular location is the cell membrane. This is an uncharacterized protein from Staphylococcus epidermidis (strain ATCC 35984 / DSM 28319 / BCRC 17069 / CCUG 31568 / BM 3577 / RP62A).